Here is a 323-residue protein sequence, read N- to C-terminus: Formyltetrahydrofolate deformylase 1, mitochondrial (323 aa).

Residues Met1–His25 constitute a mitochondrion transit peptide. The ACT domain occupies Val41–Pro124. Asp267 is a catalytic residue.

It belongs to the PurU family. Expressed in leaves, cotyledons, roots, seeds and flowers.

The protein localises to the mitochondrion. It carries out the reaction (6R)-10-formyltetrahydrofolate + H2O = (6S)-5,6,7,8-tetrahydrofolate + formate + H(+). Functionally, deformylase involved in photorespiration. Prevents excessive accumulation of 5-formyl tetrahydrofolate (THF), a potent inhibitor of the Gly decarboxylase/Ser hydroxymethyltransferase complex. This is Formyltetrahydrofolate deformylase 1, mitochondrial (PURU1) from Arabidopsis thaliana (Mouse-ear cress).